Consider the following 157-residue polypeptide: Secreted effector protein See1 (157 aa).

An N-terminal signal peptide occupies residues 1-21 (MLFTTFVSLLLVILCLVHVSA). Residues 124–157 (SYRYGDSHGNSREAEYSVADHQSASGEYKFGPTT) are disordered. Over residues 128 to 138 (GDSHGNSREAE) the composition is skewed to basic and acidic residues.

In terms of assembly, interacts with a maize homolog of SGT1, a factor acting in cell cycle progression in yeast Saccharomyces cerevisiae and an important component of plant and human innate immunity.

It is found in the secreted. The protein localises to the host cytoplasm. The protein resides in the host nucleus. In terms of biological role, effector protein involved in the induction of tumors in infected plant tissues by the fungus. Required for the reactivation of plant DNA synthesis, which is crucial for tumor progression in leaf cells. Interferes with the MAPK-triggered phosphorylation of maize SGT1 at a monocot-specific phosphorylation site, resulting in both modulation of immune responses and reactivation of DNA synthesis during leaf tumor formation. The protein is Secreted effector protein See1 of Mycosarcoma maydis (Corn smut fungus).